Here is a 233-residue protein sequence, read N- to C-terminus: Isoprenyl transferase (233 aa).

Residue Asp-12 is part of the active site. Asp-12 contacts Mg(2+). Residues 13 to 16 (GNGR), Trp-17, Arg-25, His-29, and 57 to 59 (STE) each bind substrate. Catalysis depends on Asn-60, which acts as the Proton acceptor. Residues Trp-61, Arg-63, Arg-178, and 184–186 (RLS) contribute to the substrate site. Glu-197 contacts Mg(2+).

Belongs to the UPP synthase family. In terms of assembly, homodimer. Mg(2+) serves as cofactor.

Catalyzes the condensation of isopentenyl diphosphate (IPP) with allylic pyrophosphates generating different type of terpenoids. The protein is Isoprenyl transferase of Thermotoga maritima (strain ATCC 43589 / DSM 3109 / JCM 10099 / NBRC 100826 / MSB8).